We begin with the raw amino-acid sequence, 497 residues long: Guanosine-5'-triphosphate,3'-diphosphate pyrophosphatase (497 aa).

It belongs to the GppA/Ppx family. GppA subfamily.

It catalyses the reaction guanosine 3'-diphosphate 5'-triphosphate + H2O = guanosine 3',5'-bis(diphosphate) + phosphate + H(+). It participates in purine metabolism; ppGpp biosynthesis; ppGpp from GTP: step 2/2. Catalyzes the conversion of pppGpp to ppGpp. Guanosine pentaphosphate (pppGpp) is a cytoplasmic signaling molecule which together with ppGpp controls the 'stringent response', an adaptive process that allows bacteria to respond to amino acid starvation, resulting in the coordinated regulation of numerous cellular activities. This Pseudoalteromonas translucida (strain TAC 125) protein is Guanosine-5'-triphosphate,3'-diphosphate pyrophosphatase.